We begin with the raw amino-acid sequence, 228 residues long: Ribonuclease 3 (228 aa).

The 123-residue stretch at 5–127 folds into the RNase III domain; that stretch reads LTALQERLKH…LIGAVYLDAG (123 aa). Residue E40 coordinates Mg(2+). The active site involves D44. Residues D113 and E116 each coordinate Mg(2+). The active site involves E116. A DRBM domain is found at 154–224; that stretch reads DPKTELQEWL…AAAMLIRLKA (71 aa).

The protein belongs to the ribonuclease III family. As to quaternary structure, homodimer. The cofactor is Mg(2+).

The protein resides in the cytoplasm. The catalysed reaction is Endonucleolytic cleavage to 5'-phosphomonoester.. Digests double-stranded RNA. Involved in the processing of primary rRNA transcript to yield the immediate precursors to the large and small rRNAs (23S and 16S). Processes some mRNAs, and tRNAs when they are encoded in the rRNA operon. Processes pre-crRNA and tracrRNA of type II CRISPR loci if present in the organism. The sequence is that of Ribonuclease 3 from Variovorax paradoxus (strain S110).